The following is a 297-amino-acid chain: Phosphoribosylaminoimidazole-succinocarboxamide synthase (297 aa).

It belongs to the SAICAR synthetase family.

It catalyses the reaction 5-amino-1-(5-phospho-D-ribosyl)imidazole-4-carboxylate + L-aspartate + ATP = (2S)-2-[5-amino-1-(5-phospho-beta-D-ribosyl)imidazole-4-carboxamido]succinate + ADP + phosphate + 2 H(+). It functions in the pathway purine metabolism; IMP biosynthesis via de novo pathway; 5-amino-1-(5-phospho-D-ribosyl)imidazole-4-carboxamide from 5-amino-1-(5-phospho-D-ribosyl)imidazole-4-carboxylate: step 1/2. The protein is Phosphoribosylaminoimidazole-succinocarboxamide synthase of Mycobacterium sp. (strain KMS).